The primary structure comprises 342 residues: Inositol-tetrakisphosphate 1-kinase 1 (342 aa).

Residues Lys28 and Lys70 each contribute to the 1D-myo-inositol 6-phosphate site. ATP contacts are provided by Arg105 and Lys155. Positions 116–332 (DHAADQDSTF…HKDGVGNQQE (217 aa)) constitute an ATP-grasp domain. 1D-myo-inositol 6-phosphate contacts are provided by Gly161 and His166. The ATP site is built by His166, Gln187, and Val190. 2 residues coordinate 1D-myo-inositol 6-phosphate: Lys198 and Tyr200. Residue Ser213 participates in ATP binding. The interval 219–247 (PEDDASAQGSVSFSQVSNLPTERTAEEYY) is catalytic specificity elements (CSE). A 1D-myo-inositol 6-phosphate-binding site is contributed by Asn280. Residue Asp282 coordinates Mg(2+). ATP contacts are provided by Ile296, Asp297, and Asn299. The Mg(2+) site is built by Asp297 and Asn299. The 1D-myo-inositol 6-phosphate site is built by Asn299, Gly303, and Lys306.

This sequence belongs to the ITPK1 family. In terms of assembly, monomer. Requires Mg(2+) as cofactor. Expressed in the embryo of 15 day after pollination. Expressed in kernels at earlier stages but at very low levels. Expression in the embryo peaks at 15 days after pollination and then declines. No expression is detected from endosperm and vegetative tissues.

The enzyme catalyses 1D-myo-inositol 3,4,5,6-tetrakisphosphate + ATP = 1D-myo-inositol 1,3,4,5,6-pentakisphosphate + ADP + H(+). It carries out the reaction 1D-myo-inositol 1,3,4-trisphosphate + ATP = 1D-myo-inositol 1,3,4,5-tetrakisphosphate + ADP + H(+). The catalysed reaction is 1D-myo-inositol 1,3,4-trisphosphate + ATP = 1D-myo-inositol 1,3,4,6-tetrakisphosphate + ADP + H(+). It catalyses the reaction 1D-myo-inositol 1,2,3,4,5-pentakisphosphate + ATP = 3-diphospho-1D-myo-inositol 1,2,4,5-tetrakisphosphate + ADP. The enzyme catalyses 1D-myo-inositol hexakisphosphate + ATP = 5-diphospho-1D-myo-inositol 1,2,3,4,6-pentakisphosphate + ADP. Kinase that can phosphorylate various inositol polyphosphate such as Ins(3,4,5,6)P4 or Ins(1,3,4)P3 and participates in phytic acid biosynthesis in developing seeds. Phosphorylates Ins(3,4,5,6)P4 at position 1 to form Ins(1,3,4,5,6)P5. This reaction is thought to have regulatory importance, since Ins(3,4,5,6)P4 is an inhibitor of plasma membrane Ca(2+)-activated Cl(-) channels, while Ins(1,3,4,5,6)P5 is not. Also phosphorylates Ins(1,3,4)P3 on O-5 and O-6 to form Ins(1,3,4,6)P4, an essential molecule in the hexakisphosphate (InsP6) pathway. Also able to phosphorylate Ins(3,5,6)P3 but not Ins(1,4,5)P3, Ins(2,4,5)P3, Ins(1,3,4,6)P4 nor Ins(1,3,5,6)P4. Has higher specific activity on Ins(3,4,5,6)P4 than Ins(1,3,4)P3 and Ins(3,5,6)P3. Can also could use Ins(1,2,5,6)P4 as a substrate. Able to add a beta-phosphate to the 3 positions of Ins(1,2,3,4,5)P5 and to add beta-phosphate to InsP6 to yield 5-InsP7, thus exhibiting InsP6 kinase activity. Also has Ins(1,3,4,5,6)P5 phosphatase activity. The protein is Inositol-tetrakisphosphate 1-kinase 1 of Zea mays (Maize).